Consider the following 464-residue polypeptide: Probable LL-diaminopimelate aminotransferase, chloroplastic (464 aa).

Residues 1 to 39 (MAASPAAGAAAATVSSFVSPSSFSSVKASKPDRLRPARR) constitute a chloroplast transit peptide. Gly-102 contacts substrate. A pyridoxal 5'-phosphate-binding site is contributed by Tyr-132. Substrate is bound by residues Glu-135, Lys-167, Tyr-190, and Asn-247. Pyridoxal 5'-phosphate contacts are provided by Asn-247, Asp-275, Tyr-278, Ser-305, and Ser-307. Lys-308 is subject to N6-(pyridoxal phosphate)lysine. Pyridoxal 5'-phosphate is bound at residue Arg-316. Residues Asn-347 and Arg-442 each coordinate substrate.

It belongs to the class-I pyridoxal-phosphate-dependent aminotransferase family. LL-diaminopimelate aminotransferase subfamily. As to quaternary structure, homodimer. Pyridoxal 5'-phosphate is required as a cofactor.

It localises to the plastid. It is found in the chloroplast. The catalysed reaction is (2S,6S)-2,6-diaminopimelate + 2-oxoglutarate = (S)-2,3,4,5-tetrahydrodipicolinate + L-glutamate + H2O + H(+). Its pathway is amino-acid biosynthesis; L-lysine biosynthesis via DAP pathway; LL-2,6-diaminopimelate from (S)-tetrahydrodipicolinate (aminotransferase route): step 1/1. Functionally, required for lysine biosynthesis. Catalyzes the direct conversion of tetrahydrodipicolinate to LL-diaminopimelate, a reaction that requires three enzymes in E.coli. The chain is Probable LL-diaminopimelate aminotransferase, chloroplastic (AGD2) from Oryza sativa subsp. japonica (Rice).